The sequence spans 1532 residues: IgA-specific serine endopeptidase autotransporter (1532 aa).

A signal peptide spans 1–27 (MKAKRFKINAISLSIFLAYALTPYSEA). The 295-residue stretch at 28–322 (ALVRDDVDYQ…NIYKKEFADK (295 aa)) folds into the Peptidase S6 domain. Ser-278 is an active-site residue. Disordered regions lie at residues 979 to 1136 (GRPV…KDNS) and 1166 to 1217 (LEDE…NTEL). The span at 989–1004 (AANTASQAQKATQTDG) shows a compositional bias: polar residues. The span at 1045–1101 (EAEKVARQKDEEAKRKAAEIARQQEEARKAAELAAKQKAEAERKARELARQKAEEAS) shows a compositional bias: basic and acidic residues. Positions 1107 to 1116 (KPKRRRRRAI) are enriched in basic residues. Residues 1207 to 1217 (SDKHPQDNTEL) are compositionally biased toward basic and acidic residues. The Autotransporter domain occupies 1280–1532 (ADAEKNSVWM…SGQIKIQIRF (253 aa)).

It localises to the periplasm. The protein localises to the secreted. Its subcellular location is the cell surface. The protein resides in the cell outer membrane. It catalyses the reaction Cleavage of immunoglobulin A molecules at certain Pro-|-Xaa bonds in the hinge region. No small molecule substrates are known.. Its function is as follows. This protease is specific for immunoglobulin A. This Neisseria gonorrhoeae protein is IgA-specific serine endopeptidase autotransporter (iga).